The chain runs to 345 residues: Molybdate/tungstate-binding protein WtpA (345 aa).

The N-terminal stretch at 1–27 is a signal peptide; it reads MREGGVMKKRLLALIVAFAVLTAGCLG. Residues 41–42, Ser75, 160–162, Glu218, and Tyr236 each bind molybdate; these read GS and DPC. Residues 41–42, Ser75, 160–162, Glu218, and Tyr236 contribute to the tungstate site; these read GS and DPC.

This sequence belongs to the bacterial solute-binding protein 1 family. WtpA subfamily. Monomer. The complex is composed of two ATP-binding proteins (WtpC), two transmembrane proteins (WtpB) and a solute-binding protein (WtpA).

Its subcellular location is the cell membrane. Its function is as follows. Part of the ABC transporter complex WtpABC involved in molybdate/tungstate import. Binds tungstate and molybdate, with a preference for tungstate. The chain is Molybdate/tungstate-binding protein WtpA from Pyrococcus furiosus (strain ATCC 43587 / DSM 3638 / JCM 8422 / Vc1).